A 32-amino-acid chain; its full sequence is C-reactive protein (32 aa).

Positions 2–32 (VIKTLVFQSESNNSFVELIPMKPLNLRAFXL) constitute a Pentraxin (PTX) domain.

The protein belongs to the pentraxin family. Homopentamer. Pentraxin (or pentaxin) have a discoid arrangement of 5 non-covalently bound subunits. In terms of processing, glycosylated.

Its subcellular location is the secreted. Its function is as follows. Displays several functions associated with host defense: it promotes agglutination, bacterial capsular swelling, phagocytosis, and complement fixation through its calcium-dependent binding to phosphorylcholine. This chain is C-reactive protein, found in Pleuronectes platessa (European plaice).